We begin with the raw amino-acid sequence, 433 residues long: Enolase 2 (433 aa).

The disordered stretch occupies residues 34 to 56 (RGMVPSGASTGEHEAVELRDGDK). A compositionally biased stretch (basic and acidic residues) spans 44–56 (GEHEAVELRDGDK). Gln-163 is a (2R)-2-phosphoglycerate binding site. Glu-205 functions as the Proton donor in the catalytic mechanism. Positions 243, 290, and 317 each coordinate Mg(2+). Positions 342, 371, 372, and 393 each coordinate (2R)-2-phosphoglycerate. The active-site Proton acceptor is the Lys-342.

It belongs to the enolase family. The cofactor is Mg(2+).

It is found in the cytoplasm. It localises to the secreted. The protein resides in the cell surface. It carries out the reaction (2R)-2-phosphoglycerate = phosphoenolpyruvate + H2O. It participates in carbohydrate degradation; glycolysis; pyruvate from D-glyceraldehyde 3-phosphate: step 4/5. Functionally, catalyzes the reversible conversion of 2-phosphoglycerate (2-PG) into phosphoenolpyruvate (PEP). It is essential for the degradation of carbohydrates via glycolysis. The protein is Enolase 2 of Lactococcus lactis subsp. cremoris (strain SK11).